Reading from the N-terminus, the 51-residue chain is Sperm protamine P1 (51 aa).

Cystine bridges form between C7–C15 and C40–C48.

This sequence belongs to the protamine P1 family. As to quaternary structure, cross-linked by interchain disulfide bonds around the DNA-helix. In terms of processing, phosphorylated by SRPK1. Testis.

It is found in the nucleus. The protein localises to the chromosome. Its function is as follows. Protamines substitute for histones in the chromatin of sperm during the haploid phase of spermatogenesis. They compact sperm DNA into a highly condensed, stable and inactive complex. The polypeptide is Sperm protamine P1 (PRM1) (Bos taurus (Bovine)).